We begin with the raw amino-acid sequence, 409 residues long: Divalent metal cation transporter MntH (409 aa).

Helical transmembrane passes span 19–39, 46–66, 98–118, 122–142, 155–175, 196–216, 241–261, 290–310, 320–340, 348–368, and 388–408; these read LSLM…GNFA, ASFG…AMLI, WVQA…GAAI, LLLG…TFLI, LVIG…LVFS, AVFL…IYLH, IAMT…AAAF, IFGL…TLAG, FYIP…IVIL, ILVM…VPLL, and ILGK…LVSL.

The protein belongs to the NRAMP family.

Its subcellular location is the cell inner membrane. In terms of biological role, h(+)-stimulated, divalent metal cation uptake system. This chain is Divalent metal cation transporter MntH, found in Yersinia enterocolitica serotype O:8 / biotype 1B (strain NCTC 13174 / 8081).